Reading from the N-terminus, the 179-residue chain is Sodium/potassium-transporting ATPase subunit beta-1-interacting protein 3 (179 aa).

4 helical membrane-spanning segments follow: residues 5 to 22 (TGRCTLVFICTLQMLVAL), 35 to 55 (APILGNFLHIIVVILGLFGTI), 62 to 82 (IVAYTIWTAFWVAWNVFIICF), and 151 to 171 (AVQILLSLIGFVYACYVISVI).

Belongs to the NKAIN family. As to quaternary structure, interacts with atp1b1 C-terminus.

It localises to the cell membrane. The sequence is that of Sodium/potassium-transporting ATPase subunit beta-1-interacting protein 3 (nkain3) from Xenopus laevis (African clawed frog).